The following is a 121-amino-acid chain: Large ribosomal subunit protein bL12 (121 aa).

Belongs to the bacterial ribosomal protein bL12 family. In terms of assembly, homodimer. Part of the ribosomal stalk of the 50S ribosomal subunit. Forms a multimeric L10(L12)X complex, where L10 forms an elongated spine to which 2 to 4 L12 dimers bind in a sequential fashion. Binds GTP-bound translation factors.

Forms part of the ribosomal stalk which helps the ribosome interact with GTP-bound translation factors. Is thus essential for accurate translation. The chain is Large ribosomal subunit protein bL12 from Tremblaya princeps.